The sequence spans 281 residues: Probable ABC transporter ATP-binding protein AZC_3926 (281 aa).

The segment at 1–38 (MNVLSMFGRNATRETSSPAATAGRYADEGDWEGDDHQP) is disordered. In terms of domain architecture, ABC transporter spans 45-277 (LAAFGLAKSY…PDVRRLYLGE (233 aa)). 77-84 (GPNGAGKT) provides a ligand contact to ATP.

It belongs to the ABC transporter superfamily.

The chain is Probable ABC transporter ATP-binding protein AZC_3926 from Azorhizobium caulinodans (strain ATCC 43989 / DSM 5975 / JCM 20966 / LMG 6465 / NBRC 14845 / NCIMB 13405 / ORS 571).